Reading from the N-terminus, the 312-residue chain is MGDAGLIVIGGATATGKTALAIALAQQLNSVILSADSRQVYRGFDIGTAKPTPAQQQQVRHHLIDICDPRETLTLAIYQAKAQALIAHYHAQGITPLLVGGTGLYIRSITQGLTMPQVPPQPHLRAQLMALGQQECYQWLQQVDPVAAQRIHAHDQVRTLRALEVYYTTGVPLSQQQRREPPPYRIWYFALTGGDRQQERCRIEARTQEMLAMGWLDEIQQLQRQYGEDLPLLDTLGYREMRQYLRGEVTLAEAIALTVQHTQQFAKRQRTWFRAEPDIHWLQATTLEAQLAEIQAQFTLCPKTTATKRRMS.

Residue 11–18 coordinates ATP; the sequence is GATATGKT. 13–18 lines the substrate pocket; that stretch reads TATGKT. Residues 36–39 are interaction with substrate tRNA; it reads DSRQ.

The protein belongs to the IPP transferase family. Monomer. Mg(2+) is required as a cofactor.

It catalyses the reaction adenosine(37) in tRNA + dimethylallyl diphosphate = N(6)-dimethylallyladenosine(37) in tRNA + diphosphate. In terms of biological role, catalyzes the transfer of a dimethylallyl group onto the adenine at position 37 in tRNAs that read codons beginning with uridine, leading to the formation of N6-(dimethylallyl)adenosine (i(6)A). The polypeptide is tRNA dimethylallyltransferase (Thermosynechococcus vestitus (strain NIES-2133 / IAM M-273 / BP-1)).